The primary structure comprises 366 residues: MKKKVGIVFGGKSAEHEVSLQSAKNIVDAIDSDKYDVYLLGIDKQGNWHVNDRSHYLINEEDPKLISLNKTNEGIAVIPGAEKNQIVTSNSTKSLDQLDVIFPIVHGTLGEDGSLQGMLRMANIPFVGSSVLGSAISMDKDIAKRLLKDAGLKVAKGYAYRSVDKESIHFDSLKEELGLPMFIKPANQGSSVGVHKVENEEQFYSAIKDAFQFDHKLLVEEAIVGREIECAVLGNEKPAASVPGEILPTGDFYSYEAKYIDETGAVLQIPAKLEEPVVDSIQDIALQAFKALNCEGLARVDVFLTDDNEIVINEINTLPGFTKISMYPKLWEESGVSYRELIENLIELAIERNQRDQQLKSSRSDG.

In terms of domain architecture, ATP-grasp spans 144 to 347 (KRLLKDAGLK…YRELIENLIE (204 aa)). 174–229 (KEELGLPMFIKPANQGSSVGVHKVENEEQFYSAIKDAFQFDHKLLVEEAIVGREIE) contacts ATP. Positions 301, 314, and 316 each coordinate Mg(2+).

It belongs to the D-alanine--D-alanine ligase family. The cofactor is Mg(2+). It depends on Mn(2+) as a cofactor.

It localises to the cytoplasm. It carries out the reaction 2 D-alanine + ATP = D-alanyl-D-alanine + ADP + phosphate + H(+). The protein operates within cell wall biogenesis; peptidoglycan biosynthesis. Cell wall formation. The sequence is that of D-alanine--D-alanine ligase from Oceanobacillus iheyensis (strain DSM 14371 / CIP 107618 / JCM 11309 / KCTC 3954 / HTE831).